Reading from the N-terminus, the 439-residue chain is Proline--tRNA ligase (439 aa).

Belongs to the class-II aminoacyl-tRNA synthetase family. ProS type 2 subfamily. Homodimer.

It localises to the cytoplasm. The catalysed reaction is tRNA(Pro) + L-proline + ATP = L-prolyl-tRNA(Pro) + AMP + diphosphate. Catalyzes the attachment of proline to tRNA(Pro) in a two-step reaction: proline is first activated by ATP to form Pro-AMP and then transferred to the acceptor end of tRNA(Pro). The sequence is that of Proline--tRNA ligase from Rhodopseudomonas palustris (strain BisB18).